Here is a 511-residue protein sequence, read N- to C-terminus: Bifunctional purine biosynthesis protein PurH (511 aa).

In terms of domain architecture, MGS-like spans 1–146 (MGRLALISVT…KNFAHLTVIS (146 aa)).

This sequence belongs to the PurH family.

It carries out the reaction (6R)-10-formyltetrahydrofolate + 5-amino-1-(5-phospho-beta-D-ribosyl)imidazole-4-carboxamide = 5-formamido-1-(5-phospho-D-ribosyl)imidazole-4-carboxamide + (6S)-5,6,7,8-tetrahydrofolate. The catalysed reaction is IMP + H2O = 5-formamido-1-(5-phospho-D-ribosyl)imidazole-4-carboxamide. It functions in the pathway purine metabolism; IMP biosynthesis via de novo pathway; 5-formamido-1-(5-phospho-D-ribosyl)imidazole-4-carboxamide from 5-amino-1-(5-phospho-D-ribosyl)imidazole-4-carboxamide (10-formyl THF route): step 1/1. Its pathway is purine metabolism; IMP biosynthesis via de novo pathway; IMP from 5-formamido-1-(5-phospho-D-ribosyl)imidazole-4-carboxamide: step 1/1. The protein is Bifunctional purine biosynthesis protein PurH of Microcystis aeruginosa (strain NIES-843 / IAM M-2473).